Consider the following 376-residue polypeptide: Protein XRP2 (376 aa).

Positions 1–55 (MGCFFSKKSRRKSPKKDAALPTGDESATGNDLAETNNTALGSNSNQEAPKQYSWD) are disordered. Residue Gly-2 is the site of N-myristoyl glycine attachment. A lipid anchor (S-palmitoyl cysteine) is attached at Cys-3. Residues 25–48 (ESATGNDLAETNNTALGSNSNQEA) are compositionally biased toward polar residues. One can recognise a C-CAP/cofactor C-like domain in the interval 49–204 (PKQYSWDKRE…NWSNIHDFTP (156 aa)). GTP is bound by residues 123-124 (GS) and 140-143 (QQFR).

The protein belongs to the TBCC family. In terms of processing, myristoylated on Gly-2; which may be required for membrane targeting. Post-translationally, palmitoylated on Cys-3; which may be required for plasma membrane targeting. In the retina, detected in both rod and cone photoreceptors (at protein level). Has strongest expression in the retinal outer nuclear layer (ONL) and weaker expression in the outer plexiform layer (OPL) and inner plexiform layer (IPL) (at protein level). Expressed in all tissues tested.

The protein resides in the cell membrane. It localises to the cell projection. Its subcellular location is the cilium. Acts as a GTPase-activating protein (GAP) involved in trafficking between the Golgi and the ciliary membrane. Acts as a GTPase-activating protein (GAP) for tubulin in concert with tubulin-specific chaperone C, but does not enhance tubulin heterodimerization. In the retina, required for maintenance of rod and cone photoreceptor cells. May have a role in normal retinal localization of the transducins GNB1 and GNAT1, and the rhodopsin kinase GRK1. The chain is Protein XRP2 from Danio rerio (Zebrafish).